We begin with the raw amino-acid sequence, 107 residues long: Frataxin (107 aa).

Belongs to the frataxin family. In terms of assembly, monomer.

Its subcellular location is the cytoplasm. Functionally, promotes the assembly and repair of iron-sulfur clusters by delivering Fe(2+) to proteins involved in these pathways. In Trachipleistophora hominis (Microsporidian parasite), this protein is Frataxin (YFH1).